The following is a 647-amino-acid chain: Macrolide export ATP-binding/permease protein MacB (647 aa).

Residues 6-244 enclose the ABC transporter domain; the sequence is LEISGCYRTF…VDTAVTKINN (239 aa). An ATP-binding site is contributed by 42 to 49; the sequence is GASGSGKS. Transmembrane regions (helical) follow at residues 273–293, 522–542, 577–597, and 612–632; these read FLTM…VALG, LLIS…VMNI, LVCL…GVVF, and SIVA…FLPA.

The protein belongs to the ABC transporter superfamily. Macrolide exporter (TC 3.A.1.122) family. As to quaternary structure, homodimer. Part of the tripartite efflux system MacAB-TolC, which is composed of an inner membrane transporter, MacB, a periplasmic membrane fusion protein, MacA, and an outer membrane component, TolC. The complex forms a large protein conduit and can translocate molecules across both the inner and outer membranes. Interacts with MacA.

The protein localises to the cell inner membrane. Its function is as follows. Part of the tripartite efflux system MacAB-TolC. MacB is a non-canonical ABC transporter that contains transmembrane domains (TMD), which form a pore in the inner membrane, and an ATP-binding domain (NBD), which is responsible for energy generation. Confers resistance against macrolides. This Shewanella sp. (strain W3-18-1) protein is Macrolide export ATP-binding/permease protein MacB.